A 449-amino-acid polypeptide reads, in one-letter code: Biotin carboxylase (449 aa).

Positions 1 to 445 constitute a Biotin carboxylation domain; that stretch reads MLEKVLIANR…NIHYLEKKLG (445 aa). ATP-binding positions include Lys116, Lys159, 165–166, 201–204, His209, and His236; these read GG and EKFL. In terms of domain architecture, ATP-grasp spans 120–317; it reads KDAMKRAGVP…IVKEMLRIAS (198 aa). Residue Lys238 coordinates hydrogencarbonate. Glu276 and Glu288 together coordinate ATP. Positions 276, 288, and 290 each coordinate Mg(2+). Positions 276, 288, and 290 each coordinate Mn(2+). Residues Arg292, Val295, and Arg338 each coordinate hydrogencarbonate. Residue Arg292 is part of the active site. Arg338 is a binding site for biotin.

Acetyl-CoA carboxylase is a heterohexamer of biotin carboxyl carrier protein, biotin carboxylase and the two subunits of carboxyl transferase in a 2:2 complex. Requires Mg(2+) as cofactor. It depends on Mn(2+) as a cofactor.

It carries out the reaction N(6)-biotinyl-L-lysyl-[protein] + hydrogencarbonate + ATP = N(6)-carboxybiotinyl-L-lysyl-[protein] + ADP + phosphate + H(+). Its pathway is lipid metabolism; malonyl-CoA biosynthesis; malonyl-CoA from acetyl-CoA: step 1/1. Its function is as follows. This protein is a component of the acetyl coenzyme A carboxylase complex; first, biotin carboxylase catalyzes the carboxylation of the carrier protein and then the transcarboxylase transfers the carboxyl group to form malonyl-CoA. The protein is Biotin carboxylase (accC) of Pseudomonas aeruginosa (strain ATCC 15692 / DSM 22644 / CIP 104116 / JCM 14847 / LMG 12228 / 1C / PRS 101 / PAO1).